Reading from the N-terminus, the 101-residue chain is Large ribosomal subunit protein uL24 (101 aa).

It belongs to the universal ribosomal protein uL24 family. In terms of assembly, part of the 50S ribosomal subunit.

Its function is as follows. One of two assembly initiator proteins, it binds directly to the 5'-end of the 23S rRNA, where it nucleates assembly of the 50S subunit. In terms of biological role, one of the proteins that surrounds the polypeptide exit tunnel on the outside of the subunit. This Paracoccus denitrificans (strain Pd 1222) protein is Large ribosomal subunit protein uL24.